A 1006-amino-acid polypeptide reads, in one-letter code: E3 ubiquitin-protein ligase MIB1 (1006 aa).

Positions Asn-6–Ala-74 constitute an MIB/HERC2 1 domain. The segment at His-80–Ser-132 adopts a ZZ-type zinc-finger fold. Zn(2+) contacts are provided by Cys-85, Cys-88, Cys-100, Cys-103, Cys-109, Cys-112, His-118, and His-122. The MIB/HERC2 2 domain maps to Ser-143–Ala-221. At Ser-408 the chain carries Phosphoserine. ANK repeat units follow at residues Asp-430–Gly-460, Ala-463–Ala-492, Asp-496–Ala-525, Arg-529–Leu-558, Glu-562–Ile-591, Asn-595–Glu-627, Asp-631–Ile-661, Asn-665–Ile-694, and Asp-698–Ala-729. 2 RING-type zinc fingers span residues Cys-819–Lys-854 and Cys-866–Arg-901. The stretch at Gln-935–Met-962 forms a coiled coil. Residues Cys-963–Arg-996 form an RING-type 3 zinc finger.

In terms of assembly, interacts with CEP131 and PCM1. Post-translationally, ubiquitinated; possibly via autoubiquitination. Ubiquitinated; this modification is inhibited in response to cellular stress, such as ultraviolet light (UV) radiation or heat shock. In terms of tissue distribution, widely expressed at low level. Expressed at higher level in spinal cord, ovary, whole brain, and all specific brain regions examined.

It localises to the cytoplasm. The protein resides in the cytoskeleton. Its subcellular location is the microtubule organizing center. It is found in the centrosome. The protein localises to the centriolar satellite. It localises to the cell membrane. The catalysed reaction is S-ubiquitinyl-[E2 ubiquitin-conjugating enzyme]-L-cysteine + [acceptor protein]-L-lysine = [E2 ubiquitin-conjugating enzyme]-L-cysteine + N(6)-ubiquitinyl-[acceptor protein]-L-lysine.. It participates in protein modification; protein ubiquitination. In terms of biological role, E3 ubiquitin-protein ligase that mediates ubiquitination of Delta receptors, which act as ligands of Notch proteins. Positively regulates the Delta-mediated Notch signaling by ubiquitinating the intracellular domain of Delta, leading to endocytosis of Delta receptors. Probably mediates ubiquitination and subsequent proteasomal degradation of DAPK1, thereby antagonizing anti-apoptotic effects of DAPK1 to promote TNF-induced apoptosis. Involved in ubiquitination of centriolar satellite CEP131, CEP290 and PCM1 proteins and hence inhibits primary cilium formation in proliferating cells. Mediates 'Lys-63'-linked polyubiquitination of TBK1, which probably participates in kinase activation. (Microbial infection) During adenovirus infection, mediates ubiquitination of Core-capsid bridging protein. This allows viral genome delivery into nucleus for infection. This is E3 ubiquitin-protein ligase MIB1 (MIB1) from Homo sapiens (Human).